A 689-amino-acid chain; its full sequence is Potassium-transporting ATPase ATP-binding subunit (689 aa).

4 helical membrane-spanning segments follow: residues V35–A55, A62–A82, A220–F240, and V260–I280. The active-site 4-aspartylphosphate intermediate is the D313. Residues D350, E354, F383 to S390, and K401 each bind ATP. Mg(2+) is bound by residues D524 and D528. Helical transmembrane passes span F594–M614, A622–L642, and V665–L685.

The protein belongs to the cation transport ATPase (P-type) (TC 3.A.3) family. Type IA subfamily. In terms of assembly, the system is composed of three essential subunits: KdpA, KdpB and KdpC.

The protein resides in the cell inner membrane. It catalyses the reaction K(+)(out) + ATP + H2O = K(+)(in) + ADP + phosphate + H(+). Its function is as follows. Part of the high-affinity ATP-driven potassium transport (or Kdp) system, which catalyzes the hydrolysis of ATP coupled with the electrogenic transport of potassium into the cytoplasm. This subunit is responsible for energy coupling to the transport system and for the release of the potassium ions to the cytoplasm. The sequence is that of Potassium-transporting ATPase ATP-binding subunit from Serratia proteamaculans (strain 568).